A 172-amino-acid chain; its full sequence is 3-hydroxydecanoyl-[acyl-carrier-protein] dehydratase (172 aa).

Histidine 71 is a catalytic residue.

It belongs to the thioester dehydratase family. FabA subfamily. Homodimer.

Its subcellular location is the cytoplasm. It catalyses the reaction a (3R)-hydroxyacyl-[ACP] = a (2E)-enoyl-[ACP] + H2O. The catalysed reaction is (3R)-hydroxydecanoyl-[ACP] = (2E)-decenoyl-[ACP] + H2O. The enzyme catalyses (2E)-decenoyl-[ACP] = (3Z)-decenoyl-[ACP]. Its pathway is lipid metabolism; fatty acid biosynthesis. Its function is as follows. Necessary for the introduction of cis unsaturation into fatty acids. Catalyzes the dehydration of (3R)-3-hydroxydecanoyl-ACP to E-(2)-decenoyl-ACP and then its isomerization to Z-(3)-decenoyl-ACP. Can catalyze the dehydratase reaction for beta-hydroxyacyl-ACPs with saturated chain lengths up to 16:0, being most active on intermediate chain length. The chain is 3-hydroxydecanoyl-[acyl-carrier-protein] dehydratase from Blochmanniella floridana.